The primary structure comprises 78 residues: NAD(P)H-quinone oxidoreductase subunit L (78 aa).

The next 2 membrane-spanning stretches (helical) occupy residues 10–30 and 48–68; these read LFVI…IPLG and LLIY…APFL.

It belongs to the complex I NdhL subunit family. NDH-1 can be composed of about 15 different subunits; different subcomplexes with different compositions have been identified which probably have different functions.

Its subcellular location is the cellular thylakoid membrane. The enzyme catalyses a plastoquinone + NADH + (n+1) H(+)(in) = a plastoquinol + NAD(+) + n H(+)(out). It carries out the reaction a plastoquinone + NADPH + (n+1) H(+)(in) = a plastoquinol + NADP(+) + n H(+)(out). Functionally, NDH-1 shuttles electrons from an unknown electron donor, via FMN and iron-sulfur (Fe-S) centers, to quinones in the respiratory and/or the photosynthetic chain. The immediate electron acceptor for the enzyme in this species is believed to be plastoquinone. Couples the redox reaction to proton translocation, and thus conserves the redox energy in a proton gradient. Cyanobacterial NDH-1 also plays a role in inorganic carbon-concentration. The protein is NAD(P)H-quinone oxidoreductase subunit L of Prochlorococcus marinus (strain SARG / CCMP1375 / SS120).